Consider the following 172-residue polypeptide: Adenine phosphoribosyltransferase (172 aa).

This sequence belongs to the purine/pyrimidine phosphoribosyltransferase family. As to quaternary structure, homodimer.

The protein localises to the cytoplasm. It carries out the reaction AMP + diphosphate = 5-phospho-alpha-D-ribose 1-diphosphate + adenine. It participates in purine metabolism; AMP biosynthesis via salvage pathway; AMP from adenine: step 1/1. In terms of biological role, catalyzes a salvage reaction resulting in the formation of AMP, that is energically less costly than de novo synthesis. The polypeptide is Adenine phosphoribosyltransferase (Streptococcus uberis (strain ATCC BAA-854 / 0140J)).